Here is a 202-residue protein sequence, read N- to C-terminus: LexA repressor (202 aa).

Positions 28–48 (QQEIARAFGFRSLGTVRNYLV) form a DNA-binding region, H-T-H motif. Active-site for autocatalytic cleavage activity residues include Ser120 and Lys157.

This sequence belongs to the peptidase S24 family. In terms of assembly, homodimer.

The catalysed reaction is Hydrolysis of Ala-|-Gly bond in repressor LexA.. In terms of biological role, represses a number of genes involved in the response to DNA damage (SOS response), including recA and lexA. In the presence of single-stranded DNA, RecA interacts with LexA causing an autocatalytic cleavage which disrupts the DNA-binding part of LexA, leading to derepression of the SOS regulon and eventually DNA repair. The polypeptide is LexA repressor (Syntrophotalea carbinolica (strain DSM 2380 / NBRC 103641 / GraBd1) (Pelobacter carbinolicus)).